A 379-amino-acid polypeptide reads, in one-letter code: Fructose-1,6-bisphosphate aldolase/phosphatase (379 aa).

D13 (proton acceptor; for FBP phosphatase activity) is an active-site residue. Residues D13, H20, D51, and D52 each coordinate Mg(2+). Residue H20 coordinates beta-D-fructose 1,6-bisphosphate. Residue H20 coordinates dihydroxyacetone phosphate. Beta-D-fructose 1,6-bisphosphate is bound at residue Y89. Q93 is a binding site for Mg(2+). A beta-D-fructose 1,6-bisphosphate-binding site is contributed by 102-103 (GN). D130 provides a ligand contact to Mg(2+). Residue K131 coordinates beta-D-fructose 1,6-bisphosphate. K131 is a dihydroxyacetone phosphate binding site. The active-site Proton donor/acceptor; for FBP aldolase activity is Y227. The Mg(2+) site is built by K230, D231, and D232. K230 functions as the Schiff-base intermediate with DHAP; for FBP aldolase activity in the catalytic mechanism. Residues 240 to 241 (QS), R264, D285, and Y346 contribute to the beta-D-fructose 1,6-bisphosphate site. Residues R264 and D285 each contribute to the dihydroxyacetone phosphate site.

It belongs to the FBP aldolase/phosphatase family. In terms of assembly, homooctamer; dimer of tetramers. Mg(2+) is required as a cofactor.

It carries out the reaction beta-D-fructose 1,6-bisphosphate + H2O = beta-D-fructose 6-phosphate + phosphate. The enzyme catalyses beta-D-fructose 1,6-bisphosphate = D-glyceraldehyde 3-phosphate + dihydroxyacetone phosphate. It participates in carbohydrate biosynthesis; gluconeogenesis. In terms of biological role, catalyzes two subsequent steps in gluconeogenesis: the aldol condensation of dihydroxyacetone phosphate (DHAP) and glyceraldehyde-3-phosphate (GA3P) to fructose-1,6-bisphosphate (FBP), and the dephosphorylation of FBP to fructose-6-phosphate (F6P). The chain is Fructose-1,6-bisphosphate aldolase/phosphatase from Moorella thermoacetica (strain ATCC 39073 / JCM 9320).